The primary structure comprises 181 residues: Large ribosomal subunit protein uL5 (181 aa).

This sequence belongs to the universal ribosomal protein uL5 family. As to quaternary structure, part of the 50S ribosomal subunit; part of the 5S rRNA/L5/L18/L25 subcomplex. Contacts the 5S rRNA and the P site tRNA. Forms a bridge to the 30S subunit in the 70S ribosome.

In terms of biological role, this is one of the proteins that bind and probably mediate the attachment of the 5S RNA into the large ribosomal subunit, where it forms part of the central protuberance. In the 70S ribosome it contacts protein S13 of the 30S subunit (bridge B1b), connecting the 2 subunits; this bridge is implicated in subunit movement. Contacts the P site tRNA; the 5S rRNA and some of its associated proteins might help stabilize positioning of ribosome-bound tRNAs. This chain is Large ribosomal subunit protein uL5, found in Nitrosococcus oceani (strain ATCC 19707 / BCRC 17464 / JCM 30415 / NCIMB 11848 / C-107).